We begin with the raw amino-acid sequence, 635 residues long: Protein NSP-INTERACTING KINASE 2 (635 aa).

Residues 1–32 form the signal peptide; the sequence is MLQGRREAKKSYALFSSTFFFFFICFLSSSSA. At 33–248 the chain is on the extracellular side; the sequence is ELTDKGVNFE…DGGTKNRKIA (216 aa). Residues Asn92 and Asn103 are each glycosylated (N-linked (GlcNAc...) asparagine). 4 LRR repeats span residues 104 to 128, 129 to 153, 155 to 176, and 177 to 200; these read LTNL…IGKL, MKLK…SYSK, LQYL…LANM, and TQLT…LAKT. 7 N-linked (GlcNAc...) asparagine glycosylation sites follow: Asn140, Asn162, Asn175, Asn188, Asn219, Asn231, and Asn235. The segment at 214-242 is disordered; sequence TEKDCNGTQPKPMSITLNSSQNKSSDGGT. The segment covering 219–241 has biased composition (polar residues); that stretch reads NGTQPKPMSITLNSSQNKSSDGG. Residues 249 to 269 traverse the membrane as a helical segment; the sequence is VVFGVSLTCVCLLIIGFGFLL. Over 270 to 635 the chain is Cytoplasmic; the sequence is WWRRRHNKQV…VQAMELSGPR (366 aa). At Thr309 the chain carries Phosphothreonine. One can recognise a Protein kinase domain in the interval 312 to 591; sequence FSSKNLVGKG…EGDGLVEKWE (280 aa). ATP-binding positions include 318–326 and Lys340; that span reads VGKGGFGNV. Residues Ser393 and Ser396 each carry the phosphoserine modification. Thr408 is modified (phosphothreonine). Residues 422-502 form an interaction with geminivirus NSP protein region; it reads YLHEQCDPKI…DVFGFGILLL (81 aa). The active-site Proton acceptor is the Asp435. Thr468, Thr469, and Thr474 each carry phosphothreonine. Tyr482 is subject to Phosphotyrosine. Ser484 carries the phosphoserine modification. Thr485 carries the post-translational modification Phosphothreonine. Ser489 is modified (phosphoserine). At Thr564 the chain carries Phosphothreonine. Over residues 593 to 613 the composition is skewed to polar residues; it reads SSQRAETNRSYSKPNEFSSSE. Residues 593-621 form a disordered region; it reads SSQRAETNRSYSKPNEFSSSERYSDLTDD.

Belongs to the protein kinase superfamily. Ser/Thr protein kinase family. As to quaternary structure, oligomer. Interacts with geminivirus nuclear shuttle protein (NSP). Post-translationally, autophosphorylated. In terms of tissue distribution, expressed in flowers and roots.

The protein localises to the cell membrane. The enzyme catalyses L-seryl-[protein] + ATP = O-phospho-L-seryl-[protein] + ADP + H(+). The catalysed reaction is L-threonyl-[protein] + ATP = O-phospho-L-threonyl-[protein] + ADP + H(+). Inhibited by the viral nuclear shuttle protein (NSP) that binds to the region required for oligomerization. In terms of biological role, involved in defense response to geminivirus infection. Phosphorylates RPL10A in vitro. This is Protein NSP-INTERACTING KINASE 2 (NIK2) from Arabidopsis thaliana (Mouse-ear cress).